A 21-amino-acid chain; its full sequence is GVTGFGFDLVRYLFAGVVDGR.

This sequence belongs to the vitamin-B12 independent methionine synthase family. It depends on Zn(2+) as a cofactor.

It is found in the cytoplasm. The catalysed reaction is 5-methyltetrahydropteroyltri-L-glutamate + L-homocysteine = tetrahydropteroyltri-L-glutamate + L-methionine. It functions in the pathway amino-acid biosynthesis; L-methionine biosynthesis via de novo pathway; L-methionine from L-homocysteine (MetE route): step 1/1. In terms of biological role, catalyzes the transfer of a methyl group from 5-methyltetrahydrofolate to homocysteine resulting in methionine formation. This chain is 5-methyltetrahydropteroyltriglutamate--homocysteine methyltransferase, found in Populus euphratica (Euphrates poplar).